The primary structure comprises 152 residues: 3-dehydroquinate dehydratase (152 aa).

The active-site Proton acceptor is tyrosine 23. 3 residues coordinate substrate: asparagine 74, histidine 80, and aspartate 87. The active-site Proton donor is histidine 100. Substrate is bound by residues 101 to 102 and arginine 111; that span reads LS.

This sequence belongs to the type-II 3-dehydroquinase family. As to quaternary structure, homododecamer.

It catalyses the reaction 3-dehydroquinate = 3-dehydroshikimate + H2O. It participates in metabolic intermediate biosynthesis; chorismate biosynthesis; chorismate from D-erythrose 4-phosphate and phosphoenolpyruvate: step 3/7. Catalyzes a trans-dehydration via an enolate intermediate. This chain is 3-dehydroquinate dehydratase, found in Clostridium botulinum (strain Langeland / NCTC 10281 / Type F).